Here is a 461-residue protein sequence, read N- to C-terminus: Nuclear distribution protein PAC1 (461 aa).

Positions Gln9 to Glu41 constitute a LisH domain. WD repeat units lie at residues Ser114–Lys155, His157–Arg197, Gly201–Thr248, Gly251–Lys290, Gln312–Leu355, Gly357–Lys396, and Ala401–Arg457.

The protein belongs to the WD repeat LIS1/nudF family. Self-associates. Interacts with NDL1 and dynein.

Its subcellular location is the cytoplasm. It is found in the cytoskeleton. The protein localises to the spindle pole. Its function is as follows. Positively regulates the activity of the minus-end directed microtubule motor protein dynein. May enhance dynein-mediated microtubule sliding by targeting dynein to the microtubule plus end. Required for nuclear migration during vegetative growth as well as development. Required for retrograde early endosome (EE) transport from the hyphal tip. Required for localization of dynein to the mitotic spindle poles. Recruits additional proteins to the dynein complex at SPBs. In Arthroderma otae (strain ATCC MYA-4605 / CBS 113480) (Microsporum canis), this protein is Nuclear distribution protein PAC1.